We begin with the raw amino-acid sequence, 221 residues long: Eukaryotic translation initiation factor 4E-2 (221 aa).

The span at 1–20 (MADELNKAALEEYKSSSVED) shows a compositional bias: basic and acidic residues. The tract at residues 1-36 (MADELNKAALEEYKSSSVEDRGEEGEIVGESDDTAS) is disordered. Residues 21 to 33 (RGEEGEIVGESDD) are compositionally biased toward acidic residues. 2 EIF4G-binding regions span residues 46-49 (HPLE) and 56-92 (FDNP…NNIH). MRNA contacts are provided by residues 64 to 69 (KQAAWG), Lys-96, and 114 to 115 (WE). A disulfide bond links Cys-119 and Cys-157. An EIF4G-binding region spans residues 140 to 149 (YTLLALIGEQ). Residues 164–169 (RVRQEK) and 209–213 (KKLDR) each bind mRNA.

Belongs to the eukaryotic initiation factor 4E family. EIF4F is a multi-subunit complex, the composition of which varies with external and internal environmental conditions. It is composed of at least EIF4A, EIF4E and EIF4G. EIF4E is also known to interact with other partners. In higher plants two isoforms of EIF4F have been identified, named isoform EIF4F and isoform EIF(iso)4F. Isoform EIF4F has subunits p220 and p26, whereas isoform EIF(iso)4F has subunits p82 and p28. In terms of assembly, (Microbial infection) Interacts with potyvirus viral genome-linked protein (VPg) in the nucleus; mostly potato virus Y (PVY-LYE84) and tobacco etch virus (TEV-HAT) VPg, but not with PVY-LYE90 and pepper mottle virus (PepMoV) VPg; these interactions are possible in susceptible hosts but impaired in resistant plants. Post-translationally, according to the redox status, the Cys-119-Cys-157 disulfide bridge may have a role in regulating protein function by affecting its ability to bind capped mRNA.

The protein resides in the nucleus. Its subcellular location is the cytoplasm. Component of the protein complex eIF4F, which is involved in the recognition of the mRNA cap, ATP-dependent unwinding of 5'-terminal secondary structure and recruitment of mRNA to the ribosome. Recognizes and binds the 7-methylguanosine-containing mRNA cap during an early step in the initiation of protein synthesis and facilitates ribosome binding by inducing the unwinding of the mRNAs secondary structures. Key component of recessive resistance to potyviruses. Functionally, (Microbial infection) Susceptibility host factor required for viral infection (e.g. potato virus Y (PVY) and tobacco etch virus (TEV)) by recruiting viral RNAs to the host ribosomal complex via an interaction with viral genome-linked protein (VPg). In Solanum lycopersicum (Tomato), this protein is Eukaryotic translation initiation factor 4E-2.